The chain runs to 706 residues: MSCVHNNTSFPVQTEAYLKEVFEKYKELQESKDTSLTARFARALKYYQFLIYTAFSDPKFGIGQGENTRGLLIYHQMGMGKTILSLSLAISLSHIYNPILIAPKSLHSNFQQSLLKLIKLLYPETTDHSKELQKISRRFRFVSLDAYNMGQQIIKAGGSLNGCLLIVDEAHNLFRGIINSANDKTNARQLYNNIMQAKNIRILFLTGTPCSKDPFEMVPCFNMLSGRILLPLHYERFYTAYVNKTTNSPLNADKLLNRLVGMISYAGNQNELNKLFPTELPLIIEKVEMSPEQYRQYLLARDVENAEKHASSGMYEKINAAALCLPGSEQESGSSYYVRSRMISIFASEMLTVKEDEKLSEAVQQLPKEAFTENSSPKIVCMLKNIKTSPGPVLIYSQFVELGLHVVARFLEIEGYQCLQPLKVLEEGHNTILLHKDGKDLMVKNFAEDGPTHTLVLSSKITRFTLITGKILSKERDMIQQLWNSPLNIHGEVIKILLVSKTGAEGLDLKYGRQVHILEPYWDKAREDQVKARIIRIGSHDALPPEEKTVQPFLYIAVANQKMFYSIPEGSQEQKTIDERFHERGLEKSHLNSAFRDLLKRAAIECAFNGESGCLMCQPTNALLFHENFERDLRLPNPCQPLVKAEVKAYSISYEGKQFFYQKNKDVGLGYTFYEYNPIIKAYIEIKPSNPLYIKLIKHVQAGTTA.

One can recognise a Helicase ATP-binding domain in the interval 62–227 (IGQGENTRGL…VPCFNMLSGR (166 aa)). 75–82 (HQMGMGKT) is a binding site for ATP. A DEAH box motif is present at residues 168–171 (DEAH). Positions 417–599 (QCLQPLKVLE…HLNSAFRDLL (183 aa)) constitute a Helicase C-terminal domain.

This sequence belongs to the DEAD box helicase family. DEAH subfamily. As to quaternary structure, part of the viral DNA-directed RNA polymerase that consists of 8 polII-like subunits (RPB1, RPB2, RPB3, RPB5, RPB6, RPB7, RPB9, RPB10), a capping enzyme and a termination factor.

Its subcellular location is the virion. Functionally, putative DNA-dependent ATPase required for providing the needed energy to achieve the termination of early transcripts. In African swine fever virus (isolate Tick/South Africa/Pretoriuskop Pr4/1996) (ASFV), this protein is Termination factor NPH-I homolog.